The primary structure comprises 611 residues: MIRQFSAGSSFTARHACEICRQRKVRCDRALPRCRRCERLNQACVYSPISQRRTRDEQLQELQERLAKTEAQLALDAPRGPASSMSSQSRSDSAAPAASRVPSVSASVPNSAATNPMDMVGTRSSNTSMDLPVNTSPMLDIDLFTAGADSNMALDWNPYLTALEPLDNLLPNRLSPRSLPQNGREEDISLAELNALHNYYFESVYFSFPFLNRDRFAGESTGNGPAINALIYSVALAGCTHSSPQHTKVSIYYTLARNYAEKCERDGQLNDLNFLQALLFIGRFEAMEGKVESSWMTLGRAAMLARLLRLPQMDRLEESTESQDGSGLSLLETTDPALLEERRRTFWALYILQSYIKTRTGWQCMLGDIKTFQINLPSPGLLRSDLTPLKMPFISEIGTEPCPEVSSYAGCVLMVDLALRCLDHAQGHGATNFWDGYCALVKNTDELFGMLKQHLNATSIRKDPVAFSLYLNLRATEIFSHESAIARSKEQGLPPLMTAESQRRATAAAFQISTAVRLNLPSPWKVDSDIIMLQAIFIAWPLAMALKAFYRELEHGGSRDSVNGVVTSSRLLFAALGHIEESGGHWHQSVAHVEAKLQELDEKNGFNSLAL.

Residues 17–44 (CEICRQRKVRCDRALPRCRRCERLNQAC) constitute a DNA-binding region (zn(2)-C6 fungal-type). Residues 76–125 (DAPRGPASSMSSQSRSDSAAPAASRVPSVSASVPNSAATNPMDMVGTRSS) are disordered. The span at 78–113 (PRGPASSMSSQSRSDSAAPAASRVPSVSASVPNSAA) shows a compositional bias: low complexity.

It localises to the nucleus. Its function is as follows. Transcription factor that positively regulates the expression of the gene cluster that mediates the biosynthesis of depudecin, a highly oxidized eleven-carbon linear polyketide that acts as a histone deacetylase (HDAC) inhibitor and makes a small contribution to pathogenesis. The sequence is that of Depudecin biosynthesis cluster-specific transcription activator DEP6 from Fusarium langsethiae.